Reading from the N-terminus, the 289-residue chain is Type III pantothenate kinase (289 aa).

Residue 9 to 16 participates in ATP binding; the sequence is DAGNSRVK. Substrate contacts are provided by residues Y106 and 113–116; that span reads GSDR. D115 (proton acceptor) is an active-site residue. ATP is bound at residue T139. T209 is a binding site for substrate.

This sequence belongs to the type III pantothenate kinase family. As to quaternary structure, homodimer. It depends on NH4(+) as a cofactor. The cofactor is K(+).

The protein resides in the cytoplasm. It catalyses the reaction (R)-pantothenate + ATP = (R)-4'-phosphopantothenate + ADP + H(+). It functions in the pathway cofactor biosynthesis; coenzyme A biosynthesis; CoA from (R)-pantothenate: step 1/5. Its function is as follows. Catalyzes the phosphorylation of pantothenate (Pan), the first step in CoA biosynthesis. This chain is Type III pantothenate kinase, found in Paraburkholderia phymatum (strain DSM 17167 / CIP 108236 / LMG 21445 / STM815) (Burkholderia phymatum).